We begin with the raw amino-acid sequence, 569 residues long: 4-hydroxy-7-methoxy-3-oxo-3,4-dihydro-2H-1,4-benzoxazin-2-yl glucoside beta-D-glucosidase 1a, chloroplastic (569 aa).

A chloroplast-targeting transit peptide spans 1–50 (MALLAAATLNPTTHLSLRSRAGRNSENLWLRSAASSQKSKGRFCNLTIRA). Residues glutamine 92, histidine 194, and 239-240 (NE) contribute to the a beta-D-glucoside site. Residue glutamate 240 is the Proton donor of the active site. Cysteine 259 and cysteine 265 form a disulfide bridge. Residues tyrosine 383, glutamate 456, tryptophan 504, 511-512 (EW), and phenylalanine 520 contribute to the a beta-D-glucoside site. Glutamate 456 serves as the catalytic Nucleophile.

It belongs to the glycosyl hydrolase 1 family. Homo- and heterohexamers. As to expression, expressed in young seedlings early after germination.

It localises to the plastid. The protein localises to the chloroplast. It carries out the reaction Hydrolysis of terminal, non-reducing beta-D-glucosyl residues with release of beta-D-glucose.. It catalyses the reaction DIMBOA beta-D-glucoside + H2O = DIMBOA + D-glucose. The catalysed reaction is DIBOA beta-D-glucoside + H2O = DIBOA + D-glucose. In terms of biological role, acts in defense of young plant parts against pests via the production of hydroxamic acids from hydroxamic acid glucosides. Enzymatic activity is highly correlated with plant growth. The preferred substrate is DIMBOA-beta-D-glucoside. The chain is 4-hydroxy-7-methoxy-3-oxo-3,4-dihydro-2H-1,4-benzoxazin-2-yl glucoside beta-D-glucosidase 1a, chloroplastic (GLU1A) from Triticum aestivum (Wheat).